A 295-amino-acid polypeptide reads, in one-letter code: Transcriptional regulator SirC (295 aa).

One can recognise an HTH araC/xylS-type domain in the interval 195–292 (EKVYNIIISD…KITPLSFMRT (98 aa)). 2 consecutive DNA-binding regions (H-T-H motif) follow at residues 212–233 (AEVA…AAEE) and 259–282 (ISQV…KRHF).

Its function is as follows. Positive regulator of the expression of the invasion-associated type III secretion system encoded within SPI-1 (pathogenicity island 1). In Salmonella typhi, this protein is Transcriptional regulator SirC (sirC).